Here is a 401-residue protein sequence, read N- to C-terminus: tRNA(Met) cytidine acetate ligase (401 aa).

ATP is bound by residues 7-20 (IVEY…HLYH), Gly-101, Asn-160, and 185-186 (RI).

Belongs to the TmcAL family.

Its subcellular location is the cytoplasm. The catalysed reaction is cytidine(34) in elongator tRNA(Met) + acetate + ATP = N(4)-acetylcytidine(34) in elongator tRNA(Met) + AMP + diphosphate. Functionally, catalyzes the formation of N(4)-acetylcytidine (ac(4)C) at the wobble position of elongator tRNA(Met), using acetate and ATP as substrates. First activates an acetate ion to form acetyladenylate (Ac-AMP) and then transfers the acetyl group to tRNA to form ac(4)C34. This is tRNA(Met) cytidine acetate ligase from Geobacillus sp. (strain WCH70).